The primary structure comprises 665 residues: Fructose-1,6-bisphosphatase class 3 (665 aa).

It belongs to the FBPase class 3 family. The cofactor is Mn(2+).

The catalysed reaction is beta-D-fructose 1,6-bisphosphate + H2O = beta-D-fructose 6-phosphate + phosphate. The protein operates within carbohydrate biosynthesis; gluconeogenesis. The polypeptide is Fructose-1,6-bisphosphatase class 3 (Clostridium acetobutylicum (strain ATCC 824 / DSM 792 / JCM 1419 / IAM 19013 / LMG 5710 / NBRC 13948 / NRRL B-527 / VKM B-1787 / 2291 / W)).